The sequence spans 185 residues: Ribosome-recycling factor (185 aa).

The protein belongs to the RRF family.

The protein resides in the cytoplasm. Its function is as follows. Responsible for the release of ribosomes from messenger RNA at the termination of protein biosynthesis. May increase the efficiency of translation by recycling ribosomes from one round of translation to another. The chain is Ribosome-recycling factor from Tolumonas auensis (strain DSM 9187 / NBRC 110442 / TA 4).